We begin with the raw amino-acid sequence, 455 residues long: Phosphoglucosamine mutase (455 aa).

Serine 106 serves as the catalytic Phosphoserine intermediate. Residues serine 106, aspartate 245, aspartate 247, and aspartate 249 each coordinate Mg(2+). Serine 106 is modified (phosphoserine).

It belongs to the phosphohexose mutase family. Mg(2+) is required as a cofactor. Activated by phosphorylation.

It carries out the reaction alpha-D-glucosamine 1-phosphate = D-glucosamine 6-phosphate. Its function is as follows. Catalyzes the conversion of glucosamine-6-phosphate to glucosamine-1-phosphate. The chain is Phosphoglucosamine mutase from Acaryochloris marina (strain MBIC 11017).